Reading from the N-terminus, the 180-residue chain is ADP-ribosylation factor-like protein 1 (180 aa).

Gly-2 carries the N-myristoyl glycine lipid modification. Residues 23–30 (GLDGAGKT), 66–70 (DLGGQ), and 125–128 (NKQD) contribute to the GTP site.

Belongs to the small GTPase superfamily. Arf family.

In terms of biological role, GTP-binding protein involved in protein trafficking; may modulate vesicle budding and uncoating within the Golgi apparatus. The chain is ADP-ribosylation factor-like protein 1 (Arl1) from Drosophila melanogaster (Fruit fly).